A 559-amino-acid polypeptide reads, in one-letter code: T-complex protein 1 subunit gamma (559 aa).

The cysteines at positions 368 and 374 are disulfide-linked. Residues 531–559 (KDKRGGAGQRGGDRGQGDQEETFGDQRDG) are disordered.

Belongs to the TCP-1 chaperonin family. Heterooligomeric complex of about 850 to 900 kDa that forms two stacked rings, 12 to 16 nm in diameter.

Its subcellular location is the cytoplasm. Functionally, molecular chaperone; assists the folding of proteins upon ATP hydrolysis. Known to play a role, in vitro, in the folding of actin and tubulin. The polypeptide is T-complex protein 1 subunit gamma (Oxytricha granulifera (Ciliate)).